The following is an 80-amino-acid chain: Sulfur carrier protein TusA (80 aa).

The active-site Cysteine persulfide intermediate is the Cys17.

The protein belongs to the sulfur carrier protein TusA family.

The protein resides in the cytoplasm. In terms of biological role, sulfur carrier protein which probably makes part of a sulfur-relay system. This Pseudomonas putida (strain GB-1) protein is Sulfur carrier protein TusA.